The sequence spans 115 residues: Ribonuclease P protein component 4 (115 aa).

4 residues coordinate Zn(2+): cysteine 66, cysteine 69, cysteine 96, and cysteine 99.

The protein belongs to the eukaryotic/archaeal RNase P protein component 4 family. Consists of a catalytic RNA component and at least 4-5 protein subunits. Zn(2+) is required as a cofactor.

Its subcellular location is the cytoplasm. The enzyme catalyses Endonucleolytic cleavage of RNA, removing 5'-extranucleotides from tRNA precursor.. Its function is as follows. Part of ribonuclease P, a protein complex that generates mature tRNA molecules by cleaving their 5'-ends. In Hyperthermus butylicus (strain DSM 5456 / JCM 9403 / PLM1-5), this protein is Ribonuclease P protein component 4.